A 376-amino-acid chain; its full sequence is Transcription initiation factor IIA subunit 1 (376 aa).

Residue A2 is modified to N-acetylalanine. Composition is skewed to low complexity over residues 69 to 79 (QVQQQHQPQQQ) and 89 to 105 (QAQPQQTVPQQAQTQQV). 3 disordered regions span residues 69–107 (QVQQQHQPQQQQHHHHHHHQQAQPQQTVPQQAQTQQVLI), 246–265 (AQAQITATGHQQPQAQPAQT), and 274–329 (DGTG…QELF). Phosphoserine; by TAF1 occurs at positions 280, 281, 316, and 321. A compositionally biased stretch (acidic residues) spans 280–329 (SSEEDEDEEEDYDDDEEEDKEKDGAEDGQVEEEPLNSEDDVSDEEGQELF). Residues H343 and R344 each coordinate DNA.

The protein belongs to the TFIIA subunit 1 family. TFIIA is a heterodimer of the large unprocessed subunit 1 and a small subunit gamma. It was originally believed to be a heterotrimer of an alpha (p35), a beta (p19) and a gamma subunit (p12). TFIIA forms a complex with TBP. Part of TBP-based Pol II pre-initiation complex (PIC), in which Pol II core assembles with general transcription factors and other specific initiation factors including GTF2E1, GTF2E2, GTF2F1, GTF2F2, TCEA1, ERCC2, ERCC3, GTF2H2, GTF2H3, GTF2H4, GTF2H5, GTF2A1, GTF2A2, GTF2B and TBP; this large multi-subunit PIC complex mediates DNA unwinding and targets Pol II core to the transcription start site where the first phosphodiester bond forms. The alpha and beta subunits are postranslationally produced from the precursor formby TASP1. The cleavage promotes proteasomal degradation.

It is found in the nucleus. TFIIA is a component of the transcription machinery of RNA polymerase II and plays an important role in transcriptional activation. TFIIA in a complex with TBP mediates transcriptional activity. This Pongo abelii (Sumatran orangutan) protein is Transcription initiation factor IIA subunit 1 (GTF2A1).